The following is a 696-amino-acid chain: Methionine synthase reductase (696 aa).

A Flavodoxin-like domain is found at 4-147; it reads FLLLYATQRG…VVEPWIDGLW (144 aa). Residues 10-14 and 93-124 contribute to the FMN site; these read TQRGQ and LLGL…QRFY. The interval 166-245 is hinge; that stretch reads TLSRASDAPL…SSLSIPAVPP (80 aa). Phosphoserine is present on residues serine 171 and serine 188. The 263-residue stretch at 269–531 folds into the FAD-binding FR-type domain; the sequence is DPSFQVPISK…PRATNAFHLP (263 aa). Residue lysine 289 participates in NADP(+) binding. FAD contacts are provided by residues 449-452 and 485-488; these read RPYS and GVCT. Residues 608–609, 622–624, and aspartate 657 each bind NADP(+); these read SR and YVQ. Tryptophan 695 contacts FAD.

In terms of assembly, forms a multiprotein complex with MMACHC, MMADHC and MTR. The cofactor is FAD. FMN serves as cofactor.

Its subcellular location is the cytoplasm. The catalysed reaction is 2 methylcob(III)alamin-[methionine synthase] + 2 S-adenosyl-L-homocysteine + NADP(+) + H(+) = 2 cob(II)alamin-[methionine synthase] + 2 S-adenosyl-L-methionine + NADPH. It carries out the reaction 2 cob(II)alamin + A + 2 H2O + 2 H(+) = 2 aquacob(III)alamin + AH2. Functionally, key enzyme in methionine and folate homeostasis responsible for the reactivation of methionine synthase (MTR/MS) activity by catalyzing the reductive methylation of MTR-bound cob(II)alamin. Cobalamin (vitamin B12) forms a complex with MTR to serve as an intermediary in methyl transfer reactions that cycles between MTR-bound methylcob(III)alamin and MTR bound-cob(I)alamin forms, and occasional oxidative escape of the cob(I)alamin intermediate during the catalytic cycle leads to the inactive cob(II)alamin species. The processing of cobalamin in the cytosol occurs in a multiprotein complex composed of at least MMACHC, MMADHC, MTRR and MTR which may contribute to shuttle safely and efficiently cobalamin towards MTR in order to produce methionine. Also necessary for the utilization of methyl groups from the folate cycle, thereby affecting transgenerational epigenetic inheritance. Also acts as a molecular chaperone for methionine synthase by stabilizing apoMTR and incorporating methylcob(III)alamin into apoMTR to form the holoenzyme. Also serves as an aquacob(III)alamin reductase by reducing aquacob(III)alamin to cob(II)alamin; this reduction leads to stimulation of the conversion of apoMTR and aquacob(III)alamin to MTR holoenzyme. The protein is Methionine synthase reductase of Mus musculus (Mouse).